We begin with the raw amino-acid sequence, 801 residues long: Leucine--tRNA ligase (801 aa).

Residues 39 to 50 carry the 'HIGH' region motif; it reads PYPSGAGIHVGH. Positions 578-582 match the 'KMSKS' region motif; it reads KMSKS. Lys-581 provides a ligand contact to ATP.

Belongs to the class-I aminoacyl-tRNA synthetase family.

It localises to the cytoplasm. The catalysed reaction is tRNA(Leu) + L-leucine + ATP = L-leucyl-tRNA(Leu) + AMP + diphosphate. The polypeptide is Leucine--tRNA ligase (Mesoplasma florum (strain ATCC 33453 / NBRC 100688 / NCTC 11704 / L1) (Acholeplasma florum)).